Reading from the N-terminus, the 314-residue chain is Formylglycine-generating enzyme (314 aa).

Low complexity predominate over residues 1–20 (MAVAAPSPAAAAEPGPAARP). Residues 1-31 (MAVAAPSPAAAAEPGPAARPRSTRGQVRLPG) are disordered. The Ca(2+) site is built by asparagine 194, isoleucine 195, aspartate 208, and histidine 210. Positions 272 and 277 each coordinate Cu(2+).

The protein belongs to the sulfatase-modifying factor family. Requires Cu(2+) as cofactor.

It carries out the reaction L-cysteinyl-[sulfatase] + 2 a thiol + O2 = an organic disulfide + 3-oxo-L-alanyl-[sulfatase] + hydrogen sulfide + H2O + H(+). Its pathway is protein modification; sulfatase oxidation. Its function is as follows. Oxidase that catalyzes the conversion of cysteine to 3-oxoalanine on target proteins. 3-oxoalanine modification, which is also named formylglycine (fGly), occurs in the maturation of arylsulfatases and some alkaline phosphatases that use the hydrated form of 3-oxoalanine as a catalytic nucleophile. This is Formylglycine-generating enzyme from Streptomyces coelicolor (strain ATCC BAA-471 / A3(2) / M145).